A 106-amino-acid polypeptide reads, in one-letter code: Putative protein SH (106 aa).

Positions 48 to 106 are disordered; that stretch reads HSQQNNSGHQFGDRFHSKGHQDTEGRILWKEASTRTTDSTETADTQLVQRQGNGGICLS. The segment covering 58 to 80 has biased composition (basic and acidic residues); sequence FGDRFHSKGHQDTEGRILWKEAS. A compositionally biased stretch (low complexity) spans 81 to 92; sequence TRTTDSTETADT.

In terms of tissue distribution, heart.

Functionally, may be involved with the regulation of GNRH gene expression. It is not known if this protein is transcribed. The sequence is that of Putative protein SH from Rattus norvegicus (Rat).